The sequence spans 862 residues: AP-1 complex subunit gamma-2 (862 aa).

HEAT repeat units follow at residues 1–28, 29–65, 101–136, 137–173, 308–345, 346–382, 384–417, 418–454, 458–496, 507–545, and 560–599; these read MNPFSSGTRLSDMIRAIRASKTAAEERA, VVRKECAAIRASINENDQDYRHRDLAKLMFIHMLGYP, EVLMLVTNSLKQDLNHTNQYIVGLALCALGNICSAE, MARDLAPEVERLLQFRDPNIRKKAALCAIRIIRKVPD, GLRVLAINILGKFLSNRDNNIRYVALNMLMRSLTVDSQ, AVQRHRATILECVKDSDASIQKRALELIYLLVNENNV, PLAKELIEYLEVSEQDFKGDLTAKICSIVEKFAP, EKIWYIDQMLKVLSEAGTYVKEDVWHALIVVITNAPD, YTVRALYRALHTSFEQETLVRVAIWCIGEYADLLVNNAG, TESDAVDVVENAIKHHLSDVTTKAMALIALLKISSRFPS, and SFVLELQQRSLEFSSVIQKHQNIRSSLVERMPVLDEATFS. Positions 744 to 859 constitute a GAE domain; sequence AAYPSIVAFE…LEEGQINNFP (116 aa).

It belongs to the adaptor complexes large subunit family. In terms of assembly, adaptor protein complex 1 (AP-1) is a heterotetramer composed of two large adaptins (gamma-type subunit and beta-type subunit), a medium adaptin (mu-type subunit) and a small adaptin (sigma-type subunit).

It localises to the golgi apparatus. The protein localises to the cytoplasmic vesicle. The protein resides in the clathrin-coated vesicle membrane. Its function is as follows. Subunit of clathrin-associated adaptor protein complex 1 that plays a role in protein sorting at the trans-Golgi network and early endosomes (TGN/EE). The AP complexes mediate both the recruitment of clathrin to membranes and the recognition of sorting signals within the cytosolic tails of transmembrane cargo molecules. The sequence is that of AP-1 complex subunit gamma-2 from Arabidopsis thaliana (Mouse-ear cress).